We begin with the raw amino-acid sequence, 224 residues long: Imidazoleglycerol-phosphate dehydratase (224 aa).

The protein belongs to the imidazoleglycerol-phosphate dehydratase family.

It catalyses the reaction D-erythro-1-(imidazol-4-yl)glycerol 3-phosphate = 3-(imidazol-4-yl)-2-oxopropyl phosphate + H2O. Its pathway is amino-acid biosynthesis; L-histidine biosynthesis; L-histidine from 5-phospho-alpha-D-ribose 1-diphosphate: step 6/9. The polypeptide is Imidazoleglycerol-phosphate dehydratase (HIS3) (Komagataella pastoris (Yeast)).